A 317-amino-acid chain; its full sequence is Ribosomal RNA large subunit methyltransferase F (317 aa).

The protein belongs to the methyltransferase superfamily. METTL16/RlmF family.

It localises to the cytoplasm. It catalyses the reaction adenosine(1618) in 23S rRNA + S-adenosyl-L-methionine = N(6)-methyladenosine(1618) in 23S rRNA + S-adenosyl-L-homocysteine + H(+). Its function is as follows. Specifically methylates the adenine in position 1618 of 23S rRNA. The protein is Ribosomal RNA large subunit methyltransferase F of Pseudomonas putida (strain ATCC 47054 / DSM 6125 / CFBP 8728 / NCIMB 11950 / KT2440).